We begin with the raw amino-acid sequence, 223 residues long: Glutathione S-transferase A1 (223 aa).

N-acetylmethionine is present on Met-1. N-acetylalanine; in Glutathione S-transferase A1, N-terminally processed is present on Ala-2. The GST N-terminal domain maps to 3 to 83 (GKPVLHYFNA…YIATKYDLYG (81 aa)). An N6-succinyllysine modification is found at Lys-4. Residues Tyr-9, Lys-45, 54-55 (QV), and 67-68 (QT) contribute to the glutathione site. Residues 85–208 (DMKERALIDM…QPGSQRKPPM (124 aa)) form the GST C-terminal domain.

The protein belongs to the GST superfamily. Alpha family. As to quaternary structure, homodimer. Expressed in the liver, skin and kidney.

The enzyme catalyses RX + glutathione = an S-substituted glutathione + a halide anion + H(+). It catalyses the reaction prostaglandin A2 + glutathione = prostaglandin A2-S-(R)-glutathione. The catalysed reaction is prostaglandin J2 + glutathione = prostaglandin J2-S-(R)-glutathione. It carries out the reaction (13S)-hydroperoxy-(9Z,11E)-octadecadienoate + 2 glutathione = (13S)-hydroxy-(9Z,11E)-octadecadienoate + glutathione disulfide + H2O. The enzyme catalyses androst-5-ene-3,17-dione = androst-4-ene-3,17-dione. In terms of biological role, glutathione S-transferase that catalyzes the nucleophilic attack of the sulfur atom of glutathione on the electrophilic groups of a wide range of exogenous and endogenous compounds. Involved in the formation of glutathione conjugates of both prostaglandin A2 (PGA2) and prostaglandin J2 (PGJ2). It also catalyzes the isomerization of D5-androstene-3,17-dione (AD) into D4-androstene-3,17-dione and may therefore play an important role in hormone biosynthesis. Through its glutathione-dependent peroxidase activity toward the fatty acid hydroperoxide (13S)-hydroperoxy-(9Z,11E)-octadecadienoate/13-HPODE it is also involved in the metabolism of oxidized linoleic acid. This Mus musculus (Mouse) protein is Glutathione S-transferase A1 (Gsta1).